A 253-amino-acid polypeptide reads, in one-letter code: Phosphate import ATP-binding protein PstB 3 (253 aa).

The ABC transporter domain maps to 8–248 (LVINNLDLYY…PQDERTENYI (241 aa)). 40-47 (GPSGCGKS) contributes to the ATP binding site.

The protein belongs to the ABC transporter superfamily. Phosphate importer (TC 3.A.1.7) family. As to quaternary structure, the complex is composed of two ATP-binding proteins (PstB), two transmembrane proteins (PstC and PstA) and a solute-binding protein (PstS).

Its subcellular location is the cell membrane. It catalyses the reaction phosphate(out) + ATP + H2O = ADP + 2 phosphate(in) + H(+). In terms of biological role, part of the ABC transporter complex PstSACB involved in phosphate import. Responsible for energy coupling to the transport system. This chain is Phosphate import ATP-binding protein PstB 3, found in Streptococcus agalactiae serotype III (strain NEM316).